Reading from the N-terminus, the 137-residue chain is MVAFYGIFLFGTVYLFGLAKLFYQYVSNKLVSTVHIVTDSSNELVESTEPTEIIEVDDVEIIQPIEFSEHIESSEPIESTEPISLSEREKIAEIRMKKFSQRSKISNIINKKRVQTQFSNTDYSDRHRDQVLRDWMN.

A signal peptide spans 1 to 19 (MVAFYGIFLFGTVYLFGLA).

This is an uncharacterized protein from Acanthamoeba polyphaga (Amoeba).